We begin with the raw amino-acid sequence, 437 residues long: MPKFKAARGVGGQEKHAPLADQILAGNAVRAGVREKRRGRGTGEAEEEYVGPRLSRRILQQARQQQEELEAEHGTGDKPAAPRERTTRLGPRMPQDGSDDEDEEWPTLEKAATMTAAGHHAEVVVDPEDERAIEMFMNKNPPARRTLADIIMEKLTEKQTEVETVMSEVSGFPMPQLDPRVLEVYRGVREVLSKYRSGKLPKAFKIIPALSNWEQILYVTEPEAWTAAAMYQATRIFASNLKERMAQRFYNLVLLPRVRDDVAEYKRLNFHLYMALKKALFKPGAWFKGILIPLCESGTCTLREAIIVGSIITKCSIPVLHSSAAMLKIAEMEYSGANSIFLRLLLDKKYALPYRVLDALVFHFLGFRTEKRELPVLWHQCLLTLVQRYKADLATDQKEALLELLRLQPHPQLSPEIRRELQSAVPRDVEDVPITVE.

Positions 1–105 (MPKFKAARGV…DGSDDEDEEW (105 aa)) are disordered. An Omega-N-methylarginine modification is found at R40. At S55 the chain carries Phosphoserine. Residues 71–87 (AEHGTGDKPAAPRERTT) show a composition bias toward basic and acidic residues. Phosphoserine is present on S98. T156 bears the Phosphothreonine mark. Phosphoserine is present on residues S167 and S414.

This sequence belongs to the bystin family. As to quaternary structure, binds trophinin, tastin and cytokeratins. As to expression, found in the placenta from the sixth week of pregnancy. Was localized in the cytoplasm of the syncytiotrophoblast in the chorionic villi and in endometrial decidual cells at the uteroplacental interface. After week 10, the level decreased and then disappeared from placental villi.

The protein localises to the cytoplasm. It localises to the nucleus. It is found in the nucleolus. Required for processing of 20S pre-rRNA precursor and biogenesis of 40S ribosomal subunits. May be required for trophinin-dependent regulation of cell adhesion during implantation of human embryos. In Homo sapiens (Human), this protein is Bystin.